The sequence spans 265 residues: 4-hydroxy-tetrahydrodipicolinate reductase (265 aa).

NAD(+)-binding positions include 7-12 (GASGRM) and Asp33. Arg34 is a binding site for NADP(+). NAD(+) is bound by residues 96 to 98 (GTT) and 120 to 123 (SANM). Catalysis depends on His153, which acts as the Proton donor/acceptor. His154 serves as a coordination point for (S)-2,3,4,5-tetrahydrodipicolinate. Lys157 (proton donor) is an active-site residue. 163–164 (GT) contributes to the (S)-2,3,4,5-tetrahydrodipicolinate binding site.

The protein belongs to the DapB family.

The protein resides in the cytoplasm. It carries out the reaction (S)-2,3,4,5-tetrahydrodipicolinate + NAD(+) + H2O = (2S,4S)-4-hydroxy-2,3,4,5-tetrahydrodipicolinate + NADH + H(+). It catalyses the reaction (S)-2,3,4,5-tetrahydrodipicolinate + NADP(+) + H2O = (2S,4S)-4-hydroxy-2,3,4,5-tetrahydrodipicolinate + NADPH + H(+). It participates in amino-acid biosynthesis; L-lysine biosynthesis via DAP pathway; (S)-tetrahydrodipicolinate from L-aspartate: step 4/4. Its function is as follows. Catalyzes the conversion of 4-hydroxy-tetrahydrodipicolinate (HTPA) to tetrahydrodipicolinate. The protein is 4-hydroxy-tetrahydrodipicolinate reductase of Burkholderia pseudomallei (strain 1106a).